Consider the following 200-residue polypeptide: Putative 3-methyladenine DNA glycosylase (200 aa).

Belongs to the DNA glycosylase MPG family.

The sequence is that of Putative 3-methyladenine DNA glycosylase from Rhodopseudomonas palustris (strain BisB18).